The sequence spans 517 residues: MEELQLQGYLEKDGFRQQNFLYPLIFQEYIYTLAHDHGLNSSIFYEPMEIVGLGYDNKSSSVLVKRLITRMYQQNSLIYSMNDFNQNRFVGHNNSFYSNFYSKMVSEGFAVIVEIPFSLRLVPSSEEIPKSQNLRSIHSIFPFLEDKLSHLNYVLDILIPYPIHLEILVKILQCWIQDVPSLHFLRFFLHEFHNWNNLITPTKSISVFSKENKRLFRILYNSYVSEYEFVFVFLRKQSYYLRSTSSGAFLERTHFYVKIEHLIDVCHNHFQKILWFFKDSFMHYVRYKGKAILASRGTYLLIKKWKCYLVNFWQYNLNFWSKPYRIHINPFSNYSFYFLGYISSVLINPSAVKNQMLENFYLVDTLTQKFDTIVPVIPLIGSLSKAKFCTILGHPISKPIWAELSDSDIIDRFGRICRNLSHYHSGSSKKQSLYRIKYILRLSCARTLARKHKSTVRNLLQRLGSGLLEEFFTEEEQVISPIFQKTTLFPLHGSHRERIWYLDITRINDLANYLDWS.

The protein belongs to the intron maturase 2 family. MatK subfamily.

It localises to the plastid. The protein localises to the chloroplast. Usually encoded in the trnK tRNA gene intron. Probably assists in splicing its own and other chloroplast group II introns. The polypeptide is Maturase K (Paris tetraphylla).